Reading from the N-terminus, the 186-residue chain is ADP-ribosylation factor-like protein 8A (186 aa).

Positions 1-19 form an intramembrane region, note=Mediates targeting to membranes; the sequence is MLALFNKLLDWFKALFWKE. GTP contacts are provided by residues 29–35, 71–75, and 130–133; these read QYSGKTT, DIGGQ, and NKRD.

Belongs to the small GTPase superfamily. Arf family.

The protein localises to the late endosome membrane. It is found in the lysosome membrane. In terms of biological role, may play a role in lysosomes motility. Alternatively, may play a role in chromosome segregation. This Xenopus tropicalis (Western clawed frog) protein is ADP-ribosylation factor-like protein 8A (arl8a).